The sequence spans 197 residues: Large ribosomal subunit protein bL17 (197 aa).

Residues 120–197 (DVPPADTGQG…EEEESEEDNT (78 aa)) form a disordered region. The span at 127 to 136 (GQGGSGGTRR) shows a compositional bias: gly residues. Residues 159–197 (SSDEESESVEEDEATAEEASADAEQGEAEEEEESEEDNT) show a composition bias toward acidic residues.

The protein belongs to the bacterial ribosomal protein bL17 family. In terms of assembly, part of the 50S ribosomal subunit. Contacts protein L32.

In Salinibacter ruber (strain DSM 13855 / M31), this protein is Large ribosomal subunit protein bL17.